We begin with the raw amino-acid sequence, 413 residues long: Terephthalate 1,2-dioxygenase, terminal oxygenase component subunit alpha 2 (413 aa).

Positions 41 to 144 (NYLCLESEIP…CKEEHGPRKL (104 aa)) constitute a Rieske domain. [2Fe-2S] cluster is bound by residues Cys-82, His-84, Cys-102, and His-105.

It belongs to the bacterial ring-hydroxylating dioxygenase alpha subunit family. Heterotetramer composed of 2 alpha (TphA2I and TphA2II) and 2 beta (TphA3I and TphA3II) subunits. Part of a multicomponent enzyme system composed of a reductase (TphA1I or TphA1II) and a two-subunit oxygenase component (TphA2I or TphA2II and TphA3I or TphA3II). Requires Fe cation as cofactor. The cofactor is [2Fe-2S] cluster.

It carries out the reaction terephthalate + NADH + O2 + H(+) = (3S,4R)-3,4-dihydroxycyclohexa-1,5-diene-1,4-dicarboxylate + NAD(+). With respect to regulation, inhibited by EDTA. In terms of biological role, component of the terephthalate 1,2-dioxygenase multicomponent enzyme system which catalyzes the dioxygenation of terephthalate (TER/TPA) to 1,2-dihydroxy-3,5-cyclohexadiene-1,4-dicarboxylic acid (DCD). It can also use 2,5-dicarboxypyridine (PDC) and 1,4-napthalenedicarboxylic acid (NDC) as substrates, and preferentially uses NADPH which is the physiological electron donor. This chain is Terephthalate 1,2-dioxygenase, terminal oxygenase component subunit alpha 2 (tphA2II), found in Comamonas sp.